A 185-amino-acid polypeptide reads, in one-letter code: Peptide deformylase (185 aa).

Fe cation is bound by residues Cys94 and His136. The active site involves Glu137. His140 is a Fe cation binding site.

It belongs to the polypeptide deformylase family. Fe(2+) serves as cofactor.

It catalyses the reaction N-terminal N-formyl-L-methionyl-[peptide] + H2O = N-terminal L-methionyl-[peptide] + formate. Its function is as follows. Removes the formyl group from the N-terminal Met of newly synthesized proteins. Requires at least a dipeptide for an efficient rate of reaction. N-terminal L-methionine is a prerequisite for activity but the enzyme has broad specificity at other positions. This Chlorobium phaeobacteroides (strain BS1) protein is Peptide deformylase.